Here is a 1733-residue protein sequence, read N- to C-terminus: MNLFRPLSHRLSLPSTTTTRDHHHQQHHHHPPPPPSRTHFTTITTSGRWLQRQFPVLTTTVFFSLFLSFPPHPPRPPQDHHRPTPARDHRDPRDHLPPTRTRRDHQHRPPPTTTTTTIKDPQHPQDPLLLPTKTLQEEDPHLLRPTRDPPSAKTHHHQDPPGGGPPSTSSHHHHQDPPGGGPPSPPPRPSTSSSSSHQGPPSTRPPPPQRPPPRWPPPSPQKISETRAGSENTAQTLFSHSENKLFSHPMGEGGEGDRGTAGGGEGDRDDPPPPSPPPRPPPPLPPPPPPPPPPQPPPAGGSARRRRRGGGPPGRGGRRRGGKRRRAEGTEAAAADAEEEEDGDGDEDEDEDRAEGEGREDGGEGPRGAGGGAGESESESGRAEGAPRSAEQQVGVAGVLGLLVVRDGLHLDGPERAAGPAVAAADADDLHRVPVLAGAGPGARGPRGPVGLHGAPGGGADAGLEGGKVPEHGRRGARGGDGARGQHQRGGLGVGLQQRRGAEGAQLGRQALGAAELGEAPAAAGDEDGPQRGAEPPAVGRAVPEGGARVKVRVPEPERGALAGHVLAAVHGGEHALAVGARRQRDRGPGPGAGAHRVAHVVLAAEAQRLGPGVQAGEGGLHAGEAGRAHDGARVQHGRAELAAPGPAHGALGGRVQADADVDVVVPHGRAVRGPVLDGVQHDEPAPRRAEPRAEVLHGAGEAEVPRREQQHPLGVEAADVGAPGPVPGPGVRVRRAEAVGEGGEQRREAAAARVPGRARGALGGLGAELLVGQRVVEHHHAHVLGVGYLPHPGGAAAERGAAARGDVRQGGRVEGERRAPEFGEDLLVHEGAGHLGRAVGGEGRLGGPRRVGLAGRDAAEAAVGRGVLGHGPERAPEPVVLGGGGGGGQQRGSGVRSGPESEGAALAPGPPVLFVVAVAVAVPAEGRAGEPLVLLAVPGAAGPGRAALLLAPLGRWVRAGGGGAGVAGGAGEAGLGAGAGLGAGAGLGAGGAGGPGAGEAGGGARRRRRRRWDDEAGLLGPERGQAGRGLRGPGPRGGLGEPGRGHVGRGEEGRGVGPGGLAGAGPVHAVAHQRRHGAGDEGDRVRGLPPLGRAGPGDRVAEREQRGRHLLEAGGPEGGRGAGGRGQPERAGQQALEDAAAGQDAGVRQLAGHAAGLRGGEGGADAGAEGLDGRLPGAGVRGAARVGHVGVGPAEALQDEGLLGAIVAAAHGHGAHRVRQGPERVLGGHGVPDVRQRRGHAAGDEGAVAVGRVDPALAELVEALVGGLHPRVLQPGHGLAGGPAVDEAHEGLVLLPRVPHLRDEDGHGPGRGAVAGRGLADVVLVPEPLAGVPGAAVADAAVGRRVGAGPGLPERGEQRPVGRRGPVGHEREVVVGGAALPARGPGGLRGRGRGGRGGGGGGGGRGPRGRGGRRRRRWRPGAGEWGAGPDSFVFFSLGGGRGRGGRGGRGGRGRGGGRAPRGGGGGPGGGGRAGRGEVRVAAAAAGAAEAAAAAEGALSGAAPAGLSLRGRPAVPGEAESVLVLLGAAGDGLDGDGGGGVGVGVGVGGDGAPGAKRPRIEPPRGGGLVEQGLAVLVMVTTAVPSGGGGAAAAGRRDRPGGGGGWGSGPPPCRRCGHRCWLCWWRRGPRPRRRPGLTDRVPPRGGPSPRGCRGAGRAGGGGRGGCGGGRAPGAAGGPGLCRCECCRGRRPGPGAGPGPGPEDEVTVLGALMESPTGGPGGRGPGLVLLLVFVV.

Disordered stretches follow at residues 1–41 (MNLF…THFT), 71–394 (PHPP…EQQV), 437–506 (AGAG…EGAQ), 520–548 (APAA…EGGA), 882–907 (LGGG…GAAL), 993–1141 (AGGP…EDAA), 1223–1242 (PERV…RGHA), 1348–1475 (GAGP…GRAG), 1585–1608 (SGGG…WGSG), and 1630–1665 (PRRR…RGGC). Residues 21-31 (DHHHQQHHHHP) show a composition bias toward basic residues. Over residues 77 to 97 (PQDHHRPTPARDHRDPRDHLP) the composition is skewed to basic and acidic residues. Residues 113 to 131 (TTTTTIKDPQHPQDPLLLP) are compositionally biased toward low complexity. Over residues 135 to 147 (LQEEDPHLLRPTR) the composition is skewed to basic and acidic residues. A compositionally biased stretch (pro residues) spans 179–189 (GGGPPSPPPRP). Low complexity predominate over residues 190–201 (STSSSSSHQGPP). The span at 202 to 220 (STRPPPPQRPPPRWPPPSP) shows a compositional bias: pro residues. Over residues 227–240 (RAGSENTAQTLFSH) the composition is skewed to polar residues. Residues 272 to 299 (PPPSPPPRPPPPLPPPPPPPPPPQPPPA) show a composition bias toward pro residues. Over residues 316-326 (GGRRRGGKRRR) the composition is skewed to basic residues. A compositionally biased stretch (acidic residues) spans 336 to 354 (DAEEEEDGDGDEDEDEDRA). Basic and acidic residues predominate over residues 355–364 (EGEGREDGGE). Composition is skewed to gly residues over residues 365–374 (GPRGAGGGAG), 454–466 (GAPG…GLEG), and 479–494 (GGDG…GLGV). Over residues 495–506 (GLQQRRGAEGAQ) the composition is skewed to low complexity. A compositionally biased stretch (gly residues) spans 882-892 (LGGGGGGGQQR). Over residues 893–907 (GSGVRSGPESEGAAL) the composition is skewed to low complexity. 2 stretches are compositionally biased toward gly residues: residues 993–1004 (AGGPGAGEAGGG) and 1027–1043 (AGRG…LGEP). Basic and acidic residues-rich tracts occupy residues 1078-1087 (GAGDEGDRVR) and 1100-1112 (RVAE…RHLL). The span at 1116 to 1127 (GPEGGRGAGGRG) shows a compositional bias: gly residues. The span at 1385-1407 (GPGGLRGRGRGGRGGGGGGGGRG) shows a compositional bias: gly residues. Basic residues-rich tracts occupy residues 1408-1420 (PRGR…RRWR) and 1444-1453 (RGGRGGRGGR). The span at 1454-1474 (GRGGGRAPRGGGGGPGGGGRA) shows a compositional bias: gly residues. Gly residues predominate over residues 1652 to 1665 (RGAGRAGGGGRGGC).

The chain is Probable nuclear antigen from Sus scrofa (Pig).